Here is a 444-residue protein sequence, read N- to C-terminus: tRNA (guanine-N(7)-)-methyltransferase non-catalytic subunit TRM82 (444 aa).

7 WD repeats span residues 1 to 47 (MSVI…WSDD), 48 to 99 (FDKI…LGAP), 100 to 147 (PIYS…KRFC), 148 to 192 (FSKR…EPIL), 193 to 237 (GHVS…DKWL), 238 to 279 (FGHK…STFD), and 308 to 354 (FAVS…ITFP). Positions 55–92 (RNTTAKEQQGQSSENENENKKLKSNKGDSIKRTAAKVP) are disordered. Residues 71–85 (NENKKLKSNKGDSIK) show a composition bias toward basic and acidic residues. At S93 the chain carries Phosphoserine.

It belongs to the WD repeat TRM82 family. As to quaternary structure, forms a heterodimer with the catalytic subunit TRM8.

It localises to the nucleus. It participates in tRNA modification; N(7)-methylguanine-tRNA biosynthesis. In terms of biological role, required for the formation of N(7)-methylguanine at position 46 (m7G46) in tRNA, a modification required to maintain stability of tRNAs; its absence resulting in tRNA decay. In the complex, it is required to stabilize and induce conformational changes of the catalytic subunit. The chain is tRNA (guanine-N(7)-)-methyltransferase non-catalytic subunit TRM82 from Saccharomyces cerevisiae (strain RM11-1a) (Baker's yeast).